A 590-amino-acid polypeptide reads, in one-letter code: Ankyrin repeat domain-containing protein 13A (590 aa).

2 ANK repeats span residues 40–69 (RGRTLLHLAVSLGHLESARVLLRHKADVTK) and 73–102 (QGWTVLHEAVSTGDPEMVYTVLQHRDYHNT). Ser205 is subject to Phosphoserine. UIM domains follow at residues 483 to 502 (EDYEIMQFAIQQSLLESSRS), 519 to 538 (TYDAQYERAIQESLLTSTEG), 549 to 568 (RFDNDLQLAMELSAKELEEW), and 574 to 590 (EEEAELQQVLQLSLTDK). Ser586 bears the Phosphoserine mark.

In terms of assembly, interacts (via the UIM 3 and 4 repeats) with EGFR (ubiquitinated); the interaction is direct, inhibited by ANKRD13A monoubiquitination and may regulate EGFR internalization. Monoubiquitinated, inhibits interaction with ubiquitinated EGFR.

Its subcellular location is the cell membrane. The protein localises to the late endosome. In terms of biological role, ubiquitin-binding protein that specifically recognizes and binds 'Lys-63'-linked ubiquitin. Does not bind 'Lys-48'-linked ubiquitin. Positively regulates the internalization of ligand-activated EGFR by binding to the Ub moiety of ubiquitinated EGFR at the cell membrane. The chain is Ankyrin repeat domain-containing protein 13A (ANKRD13A) from Homo sapiens (Human).